Reading from the N-terminus, the 563-residue chain is Alpha-keto-acid decarboxylase (563 aa).

Glutamate 59 lines the thiamine diphosphate pocket. Positions 348-367 are disordered; it reads SPPVASPPAEPLPPPPPREQ. Pro residues predominate over residues 351 to 366; the sequence is VASPPAEPLPPPPPRE. Residues 394 to 476 are thiamine pyrophosphate binding; sequence TSFYGMADHR…VVVNNDGYTV (83 aa). Mg(2+)-binding residues include aspartate 444, asparagine 471, and glycine 473.

This sequence belongs to the TPP enzyme family. It depends on a metal cation as a cofactor. Thiamine diphosphate is required as a cofactor.

Its function is as follows. Decarboxylates branched-chain and aromatic alpha-keto acids to aldehydes. This Mycobacterium avium (strain 104) protein is Alpha-keto-acid decarboxylase (kdc).